The chain runs to 348 residues: Protein pelota homolog (348 aa).

It belongs to the eukaryotic release factor 1 family. Pelota subfamily. As to quaternary structure, monomer. A divalent metal cation serves as cofactor.

Its subcellular location is the cytoplasm. In terms of biological role, may function in recognizing stalled ribosomes, interact with stem-loop structures in stalled mRNA molecules, and effect endonucleolytic cleavage of the mRNA. May play a role in the release non-functional ribosomes and degradation of damaged mRNAs. Has endoribonuclease activity. The sequence is that of Protein pelota homolog from Methanococcus vannielii (strain ATCC 35089 / DSM 1224 / JCM 13029 / OCM 148 / SB).